Here is a 184-residue protein sequence, read N- to C-terminus: C-phycoerythrin class 1 subunit beta (184 aa).

2 residues coordinate (2R,3E)-phycoerythrobilin: cysteine 50 and cysteine 61. N4-methylasparagine is present on asparagine 72. (2R,3E)-phycoerythrobilin is bound by residues cysteine 82 and cysteine 165.

Belongs to the phycobiliprotein family. As to quaternary structure, heterodimer of an alpha and a beta chain. Post-translationally, contains three covalently linked bilin chromophores.

It localises to the cellular thylakoid membrane. Light-harvesting photosynthetic bile pigment-protein from the phycobiliprotein complex. This Synechococcus sp. (strain WH7803) protein is C-phycoerythrin class 1 subunit beta (cpeB).